The following is a 242-amino-acid chain: Tyrosine recombinase XerD-like (242 aa).

Residues 1 to 71 (MKEAIDQFIQ…AVNQFLYFLY (71 aa)) form the Core-binding (CB) domain. Residues 90–242 (ENSSQGSLLD…KSITTLEKYR (153 aa)) form the Tyr recombinase domain. Active-site residues include Lys148 and Arg209. Tyr241 functions as the O-(3'-phospho-DNA)-tyrosine intermediate in the catalytic mechanism.

It belongs to the 'phage' integrase family. XerD-like subfamily.

The protein localises to the cytoplasm. Functionally, putative tyrosine recombinase. Not involved in the cutting and rejoining of the recombining DNA molecules on dif(SL) site. In Streptococcus gordonii (strain Challis / ATCC 35105 / BCRC 15272 / CH1 / DL1 / V288), this protein is Tyrosine recombinase XerD-like.